Consider the following 795-residue polypeptide: Phenylalanine--tRNA ligase beta subunit (795 aa).

Positions 39–148 (AAKFNGVLVG…SDAPVGTDLR (110 aa)) constitute a tRNA-binding domain. A B5 domain is found at 401–476 (PKVTEVRLRR…RVYGYNSIPN (76 aa)). The Mg(2+) site is built by Asp454, Asp460, Glu463, and Glu464. The FDX-ACB domain maps to 701-794 (SKFPSNRRDI…LAEQFNASLR (94 aa)).

The protein belongs to the phenylalanyl-tRNA synthetase beta subunit family. Type 1 subfamily. Tetramer of two alpha and two beta subunits. It depends on Mg(2+) as a cofactor.

The protein localises to the cytoplasm. It catalyses the reaction tRNA(Phe) + L-phenylalanine + ATP = L-phenylalanyl-tRNA(Phe) + AMP + diphosphate + H(+). In Pseudoalteromonas translucida (strain TAC 125), this protein is Phenylalanine--tRNA ligase beta subunit.